A 241-amino-acid chain; its full sequence is Uridylate kinase (241 aa).

Residue lysine 12 to glycine 15 coordinates ATP. An involved in allosteric activation by GTP region spans residues glycine 20–glycine 25. Glycine 54 contacts UMP. ATP is bound by residues glycine 55 and arginine 59. UMP contacts are provided by residues aspartate 74 and threonine 135–threonine 142. Residues asparagine 163, tyrosine 169, and aspartate 172 each contribute to the ATP site.

It belongs to the UMP kinase family. Homohexamer.

It is found in the cytoplasm. It carries out the reaction UMP + ATP = UDP + ADP. The protein operates within pyrimidine metabolism; CTP biosynthesis via de novo pathway; UDP from UMP (UMPK route): step 1/1. With respect to regulation, allosterically activated by GTP. Inhibited by UTP. Catalyzes the reversible phosphorylation of UMP to UDP. The chain is Uridylate kinase from Lactobacillus delbrueckii subsp. bulgaricus (strain ATCC 11842 / DSM 20081 / BCRC 10696 / JCM 1002 / NBRC 13953 / NCIMB 11778 / NCTC 12712 / WDCM 00102 / Lb 14).